The primary structure comprises 133 residues: Ribosome-binding factor A (133 aa).

This sequence belongs to the RbfA family. In terms of assembly, monomer. Binds 30S ribosomal subunits, but not 50S ribosomal subunits or 70S ribosomes.

The protein resides in the cytoplasm. Functionally, one of several proteins that assist in the late maturation steps of the functional core of the 30S ribosomal subunit. Associates with free 30S ribosomal subunits (but not with 30S subunits that are part of 70S ribosomes or polysomes). Required for efficient processing of 16S rRNA. May interact with the 5'-terminal helix region of 16S rRNA. This chain is Ribosome-binding factor A, found in Salmonella heidelberg (strain SL476).